The primary structure comprises 120 residues: uncharacterized protein (120 aa).

The helical transmembrane segment at 40-62 threads the bilayer; it reads SFLTDALLNLIYILFFSSSVFNW.

It is found in the membrane. This is an uncharacterized protein from Saccharomyces cerevisiae (strain ATCC 204508 / S288c) (Baker's yeast).